The following is a 322-amino-acid chain: Digestive cysteine proteinase 1 (322 aa).

Positions 1-16 are cleaved as a signal peptide; sequence MKVVALFLFGLALAAA. Residues 17–105 constitute a propeptide, activation peptide; it reads NPSWEEFKGK…VFTSTDAAPE (89 aa). 3 cysteine pairs are disulfide-bonded: C126/C170, C160/C203, and C262/C311. Residue C129 is part of the active site. Catalysis depends on residues H269 and N289.

The protein belongs to the peptidase C1 family.

Its activity is regulated as follows. Inhibited by E-64, antipain, leupeptin, heavy metal ions, iodoacetic acid, dithionitrobenzene, p-hydroxymercuri-benzoate; activated by mercaptoethanol and dithiothreitol. This chain is Digestive cysteine proteinase 1 (LCP1), found in Homarus americanus (American lobster).